Reading from the N-terminus, the 748-residue chain is NAD(P)H-quinone oxidoreductase subunit 5, chloroplastic (748 aa).

Helical transmembrane passes span 9-29 (WIIPFLPLPVPMLIGVGLLLV), 40-60 (WAFPSVLLLSIVMIFSADLSI), 89-109 (IDPLTSIMSILITTVGIMVLV), 121-140 (YLRFFAYMSFSNTSMLGLVT), 147-167 (IYIFWELVGMCSYLLIGFWFT), 185-205 (GDFGLLLGILGLYWITGSFEF), 224-244 (LFVTLCASLLFVGAVAKSAQF), 258-278 (TPISALIHAATMVAAGIFLVA), 280-300 (LFPLFTVIPYIMNLISLIGII), 327-347 (LGYTMLALGMGSYRAALFHLI), 354-374 (ALLFLGSGSIIHSMETVVGYS), 396-416 (TAFLLGTLSLCGIPPLACFWS), 425-445 (WLYSPIFAIIACSTAGLTAFY), 551-571 (LLPLLVLVLFTLFVGFIGIPF), 605-625 (FITNAIFSVSIAYFGIFIASL), and 726-746 (YLFLYLSYVLIFLLISYFLFL).

The protein belongs to the complex I subunit 5 family. As to quaternary structure, NDH is composed of at least 16 different subunits, 5 of which are encoded in the nucleus.

It is found in the plastid. It localises to the chloroplast thylakoid membrane. It catalyses the reaction a plastoquinone + NADH + (n+1) H(+)(in) = a plastoquinol + NAD(+) + n H(+)(out). The catalysed reaction is a plastoquinone + NADPH + (n+1) H(+)(in) = a plastoquinol + NADP(+) + n H(+)(out). In terms of biological role, NDH shuttles electrons from NAD(P)H:plastoquinone, via FMN and iron-sulfur (Fe-S) centers, to quinones in the photosynthetic chain and possibly in a chloroplast respiratory chain. The immediate electron acceptor for the enzyme in this species is believed to be plastoquinone. Couples the redox reaction to proton translocation, and thus conserves the redox energy in a proton gradient. This Platanus occidentalis (Sycamore) protein is NAD(P)H-quinone oxidoreductase subunit 5, chloroplastic (ndhF).